The sequence spans 850 residues: Endoribonuclease ysh-1 (850 aa).

Zn(2+)-binding residues include H83, H85, D87, H88, H173, and D194. The active-site Proton donor is the H442. H464 serves as a coordination point for Zn(2+). 2 disordered regions span residues 685–708 (VKRSATKNPHTHSPLPADKNPHSH) and 732–784 (SPIV…EQQL). Polar residues predominate over residues 744-754 (PTTKAITSPSE). A compositionally biased stretch (basic and acidic residues) spans 755-766 (ETAKSSDVKSDA). Acidic residues predominate over residues 767-781 (DADASMDVSEEDEDE).

The protein belongs to the metallo-beta-lactamase superfamily. RNA-metabolizing metallo-beta-lactamase-like family. CPSF2/YSH1 subfamily.

The protein localises to the nucleus. In terms of biological role, component of the cleavage factor I (CF I) involved in pre-mRNA 3'-end processing. This is Endoribonuclease ysh-1 (ysh-1) from Neurospora crassa (strain ATCC 24698 / 74-OR23-1A / CBS 708.71 / DSM 1257 / FGSC 987).